A 587-amino-acid polypeptide reads, in one-letter code: 65-kDa microtubule-associated protein 1 (587 aa).

Coiled coils occupy residues 46–84 (QECLDVYKRKVEQAAKSRAELLQTLSDANAELSSLTMSL), 151–181 (DESDLSLKKLDDFQSQLQELQKEKSDRLRKV), 234–257 (LTLKDDKKQRLQKLQELATQLIDL), 290–317 (ALARDLIEQAEVEVDRLDQLKASRMKEI), and 461–489 (AMLDEYGMLRQEREEEKRRLREQKKVQEQ). Positions 474-494 (EEEKRRLREQKKVQEQPHVEQ) are enriched in basic and acidic residues. A disordered region spans residues 474–587 (EEEKRRLREQ…AADHQVPASP (114 aa)). Ser-503 is modified (phosphoserine). Phosphothreonine is present on Thr-526. Positions 531–542 (LSLNANQNGSRS) are enriched in polar residues. 2 positions are modified to phosphoserine: Ser-532 and Ser-540. A phosphothreonine mark is found at Thr-543 and Thr-552. The span at 543 to 553 (TAKEAGRRETL) shows a compositional bias: basic and acidic residues. Phosphoserine occurs at positions 573, 576, and 586.

It belongs to the MAP65/ASE1 family. Forms dimer. Binds to MT, mostly with coaligned MT, both between parallel or antiparallel, forming thick bundles. Interacts with the alpha-tubulin subunit of the tubulin heterodimer. Bundles polymerized MT via the formation of 25-nm crossbridges at specific stages of the cell cycle (e.g. bundles microtubules in interphase, anaphase and telophase but does not bind microtubules in prophase or metaphase), at the plus-end, the minus-end, or along the entire length of MT, and along phragmoplast MT. Interacts with SH3P1 and MPK4. In terms of processing, basal phosphorylation at all stages of the cell cycle. MT-binding properties inhibited by hyperphosphorylation mediated by CDKs and/or MAPKs (e.g. ANP2, ANP3, MPK4 and MPK6) during prometaphase and metaphase. As to expression, expressed in all organs and tissues with the exception of sepals and anthers. Bound to subsets of microtubules in the cells of root epidermis, hypocotyl and cotyledons (at protein level).

Its subcellular location is the nucleus. The protein localises to the cytoplasm. It is found in the cytoskeleton. The protein resides in the spindle. It localises to the phragmoplast. Its subcellular location is the cell cortex. Functionally, microtubule-associated protein that bundle and stabilize adjacent microtubules (MT) of the cell cortex. Enhances MT nucleation. Can also bind to tubulin dimers and promotes their polymerization. Confers MT resistance to the drug propyzamide and cold conditions. Plays a role in the central spindle at anaphase to early cytokinesis but is not essential at the midline of the phragmoplast at later stages. Represses metaphase spindle organization and the transition to anaphase in dephosphorylated active form. Promotes the formation of a planar network of antiparallel microtubules. May be involved in stomatal movement modulation by regulating the dynamic and arrangement of cortical MT. The chain is 65-kDa microtubule-associated protein 1 (MAP65-1) from Arabidopsis thaliana (Mouse-ear cress).